Reading from the N-terminus, the 79-residue chain is RNA-binding protein Hfq (79 aa).

The Sm domain maps to 10 to 70 (DAFLNHVRKT…ISTIMPAQPI (61 aa)).

This sequence belongs to the Hfq family. As to quaternary structure, homohexamer.

In terms of biological role, RNA chaperone that binds small regulatory RNA (sRNAs) and mRNAs to facilitate mRNA translational regulation in response to envelope stress, environmental stress and changes in metabolite concentrations. Also binds with high specificity to tRNAs. This is RNA-binding protein Hfq from Ruegeria sp. (strain TM1040) (Silicibacter sp.).